The chain runs to 538 residues: Low affinity inorganic phosphate transporter 3 (538 aa).

Topologically, residues 1-24 are cytoplasmic; it reads MAKDQLQVLNALDVAKTQLYHFTA. The chain crosses the membrane as a helical span at residues 25-45; sequence IVIAGMGFFTDAYDLFCISLV. Over 46–70 the chain is Extracellular; it reads TKLLGRIYYFHEGAPKPGILPSGIS. A helical membrane pass occupies residues 71 to 91; that stretch reads AAVNGVAFIGTLSGQLFFGWL. At 92–99 the chain is on the cytoplasmic side; the sequence is GDKLGRKK. Residues 100–120 form a helical membrane-spanning segment; that stretch reads VYGMTLMLMVICSIACGLSFG. Residues 121-122 lie on the Extracellular side of the membrane; sequence KT. The helical transmembrane segment at 123 to 143 threads the bilayer; sequence ANGVIATLCFFRFWLGFGIGG. Residues 144 to 164 are Cytoplasmic-facing; sequence DYPLSATIMSEYANKKTRGAF. A helical transmembrane segment spans residues 165–185; it reads IAAVFAMQGFGILAGGIVALI. The Extracellular portion of the chain corresponds to 186–211; sequence VSAGFKNAYPAPTYSAHGKDSTPPEA. Residues 212–232 traverse the membrane as a helical segment; sequence DYVWRIIVMIGALPALLTYYW. Topologically, residues 233-292 are cytoplasmic; it reads RMKMPETARYTALVAKNTVKAAADMSKVLNVEIEEDKATVEKIEENGNSFGLFSKEFLRR. A helical transmembrane segment spans residues 293-313; the sequence is HGLHLLGTTSTWFLLDIAFYS. Residues 314–345 lie on the Extracellular side of the membrane; it reads QNLFQKDIFSKIGWIPPPETMNALDEVFRIAR. Residues 346–366 traverse the membrane as a helical segment; the sequence is AQTLIALCSTVPGYWFTVAFI. Residues 367 to 371 lie on the Cytoplasmic side of the membrane; the sequence is DKMGR. Residues 372-392 form a helical membrane-spanning segment; it reads FAIQLMGSFFMTVFMFALAIP. Over 393–402 the chain is Extracellular; that stretch reads YDHWTKKENR. The helical transmembrane segment at 403-423 threads the bilayer; the sequence is IGFVIMYSLTFFFANFGPNAT. The Cytoplasmic portion of the chain corresponds to 424–442; it reads TFVVPAEIFPARLRSTCHG. Residues 443 to 463 form a helical membrane-spanning segment; that stretch reads ISAAAGKAGAIVGAFGFLYAA. The Extracellular portion of the chain corresponds to 464 to 483; it reads QSTDPKKVDAGYPTGIGVKN. A helical membrane pass occupies residues 484–504; it reads ALIVLGCVNFLGMLSTLLVPE. Residues 505-538 lie on the Cytoplasmic side of the membrane; it reads SKGKSLEEMSKENEGEEENYGTETKGENAQTVPV. Positions 506 to 517 are enriched in basic and acidic residues; it reads KGKSLEEMSKEN. A disordered region spans residues 506 to 538; the sequence is KGKSLEEMSKENEGEEENYGTETKGENAQTVPV.

It belongs to the major facilitator superfamily. Phosphate:H(+) symporter (TC 2.A.1.9) family. As to expression, expressed at low levels in non-mycorrhized roots.

Its subcellular location is the cell membrane. It carries out the reaction phosphate(in) + H(+)(in) = phosphate(out) + H(+)(out). Functionally, low-affinity transporter for external inorganic phosphate (Pi) probably involved in the acquisition of phosphate released by arbuscular mycorrhizal (AM) fungi during AM symbiosis. In Petunia hybrida (Petunia), this protein is Low affinity inorganic phosphate transporter 3.